A 281-amino-acid polypeptide reads, in one-letter code: 2-dehydro-3-deoxyphosphooctonate aldolase (281 aa).

Belongs to the KdsA family.

The protein resides in the cytoplasm. The catalysed reaction is D-arabinose 5-phosphate + phosphoenolpyruvate + H2O = 3-deoxy-alpha-D-manno-2-octulosonate-8-phosphate + phosphate. The protein operates within carbohydrate biosynthesis; 3-deoxy-D-manno-octulosonate biosynthesis; 3-deoxy-D-manno-octulosonate from D-ribulose 5-phosphate: step 2/3. It functions in the pathway bacterial outer membrane biogenesis; lipopolysaccharide biosynthesis. This chain is 2-dehydro-3-deoxyphosphooctonate aldolase, found in Acidithiobacillus ferrooxidans (strain ATCC 23270 / DSM 14882 / CIP 104768 / NCIMB 8455) (Ferrobacillus ferrooxidans (strain ATCC 23270)).